Reading from the N-terminus, the 379-residue chain is GPN-loop GTPase QQT2 (379 aa).

M1 carries the N-acetylmethionine modification. G51–S56 provides a ligand contact to GTP. A Gly-Pro-Asn (GPN)-loop; involved in dimer interface motif is present at residues G108–N110. Residues N211–D214 and A267 each bind GTP. Residues M288–E322 adopt a coiled-coil conformation. Composition is skewed to basic and acidic residues over residues E303–E322 and L335–L346. The disordered stretch occupies residues E303–L379. Residues E347–D372 are compositionally biased toward acidic residues.

The protein belongs to the GPN-loop GTPase family. As to quaternary structure, heterodimer with QQT1. Expressed in individual cells of roots, leaves and flowers.

Its subcellular location is the cytoplasm. It localises to the nucleus. The protein localises to the cytoskeleton. The protein resides in the spindle. It is found in the phragmoplast. Small GTPase that is essential for the correct formation of the tangential divisions in early embryos. Associates with microtubule during mitosis and may function in the positioning of the division plane. May participate in the patterning of the early embryo at the octant-dermatogen transition. The polypeptide is GPN-loop GTPase QQT2 (Arabidopsis thaliana (Mouse-ear cress)).